The following is a 283-amino-acid chain: Pyridoxal kinase PdxY (283 aa).

Ser8 is a substrate binding site. ATP-binding residues include Asp110 and Glu147. Asp219 lines the substrate pocket.

The protein belongs to the pyridoxine kinase family. PdxY subfamily. As to quaternary structure, homodimer. Mg(2+) serves as cofactor.

It carries out the reaction pyridoxal + ATP = pyridoxal 5'-phosphate + ADP + H(+). The protein operates within cofactor metabolism; pyridoxal 5'-phosphate salvage; pyridoxal 5'-phosphate from pyridoxal: step 1/1. Functionally, pyridoxal kinase involved in the salvage pathway of pyridoxal 5'-phosphate (PLP). Catalyzes the phosphorylation of pyridoxal to PLP. The protein is Pyridoxal kinase PdxY of Leifsonia xyli subsp. xyli (strain CTCB07).